The chain runs to 531 residues: 2,3-bisphosphoglycerate-independent phosphoglycerate mutase (531 aa).

2 residues coordinate Mn(2+): Asp-15 and Ser-65. The Phosphoserine intermediate role is filled by Ser-65. Substrate-binding positions include His-126, 155–156 (RD), Arg-187, Arg-193, 257–260 (RPDR), and Lys-330. Residues Asp-397, His-401, Asp-438, His-439, and His-456 each contribute to the Mn(2+) site.

This sequence belongs to the BPG-independent phosphoglycerate mutase family. As to quaternary structure, monomer. Requires Mn(2+) as cofactor.

It carries out the reaction (2R)-2-phosphoglycerate = (2R)-3-phosphoglycerate. The protein operates within carbohydrate degradation; glycolysis; pyruvate from D-glyceraldehyde 3-phosphate: step 3/5. Functionally, catalyzes the interconversion of 2-phosphoglycerate and 3-phosphoglycerate. The polypeptide is 2,3-bisphosphoglycerate-independent phosphoglycerate mutase (Thermosynechococcus vestitus (strain NIES-2133 / IAM M-273 / BP-1)).